Here is a 165-residue protein sequence, read N- to C-terminus: Type 3 secretion system regulator YopR (165 aa).

A 5' secretion signal region spans residues 2–11 (TVTLNRGSIT). Residues 131–149 (PYLSELINKELMILLPYNS) are 3' secretion signal.

The protein belongs to the YopR family.

Its subcellular location is the secreted. Functionally, may be involved in the regulation of the assembly of the type III secretion system (T3SS), also called injectisome, which is used to inject bacterial effector proteins into eukaryotic host cells. May control the secretion and/or polymerization of YscF/SctF, the principal component of the needle filament, thereby impacting the assembly of the T3SS. Involved in pathogenesis. Essential for the establishment of Yersinia infections in a mouse model system. This is Type 3 secretion system regulator YopR from Yersinia enterocolitica.